The chain runs to 130 residues: Small ribosomal subunit protein uS9 (130 aa).

This sequence belongs to the universal ribosomal protein uS9 family.

The protein is Small ribosomal subunit protein uS9 of Pectobacterium atrosepticum (strain SCRI 1043 / ATCC BAA-672) (Erwinia carotovora subsp. atroseptica).